A 764-amino-acid polypeptide reads, in one-letter code: 5-methyltetrahydropteroyltriglutamate--homocysteine methyltransferase (764 aa).

5-methyltetrahydropteroyltri-L-glutamate contacts are provided by residues 17–20 and K117; that span reads RELK. L-homocysteine contacts are provided by residues 436–438 and E489; that span reads IGS. L-methionine contacts are provided by residues 436–438 and E489; that span reads IGS. 5-methyltetrahydropteroyltri-L-glutamate contacts are provided by residues 520–521 and W566; that span reads RC. Residue D604 participates in L-homocysteine binding. D604 is an L-methionine binding site. E610 provides a ligand contact to 5-methyltetrahydropteroyltri-L-glutamate. Positions 646, 648, and 670 each coordinate Zn(2+). H699 functions as the Proton donor in the catalytic mechanism. Residue C731 participates in Zn(2+) binding.

It belongs to the vitamin-B12 independent methionine synthase family. Requires Zn(2+) as cofactor.

The enzyme catalyses 5-methyltetrahydropteroyltri-L-glutamate + L-homocysteine = tetrahydropteroyltri-L-glutamate + L-methionine. It participates in amino-acid biosynthesis; L-methionine biosynthesis via de novo pathway; L-methionine from L-homocysteine (MetE route): step 1/1. Its function is as follows. Catalyzes the transfer of a methyl group from 5-methyltetrahydrofolate to homocysteine resulting in methionine formation. This Baumannia cicadellinicola subsp. Homalodisca coagulata protein is 5-methyltetrahydropteroyltriglutamate--homocysteine methyltransferase.